The following is a 162-amino-acid chain: Phosphopantetheine adenylyltransferase (162 aa).

T9 is a binding site for substrate. ATP-binding positions include 9-10 (TF) and H17. Positions 41, 73, and 87 each coordinate substrate. ATP contacts are provided by residues 88–90 (GLR), E98, and 123–129 (FAFLSST).

This sequence belongs to the bacterial CoaD family. Homohexamer. It depends on Mg(2+) as a cofactor.

Its subcellular location is the cytoplasm. The enzyme catalyses (R)-4'-phosphopantetheine + ATP + H(+) = 3'-dephospho-CoA + diphosphate. It participates in cofactor biosynthesis; coenzyme A biosynthesis; CoA from (R)-pantothenate: step 4/5. Reversibly transfers an adenylyl group from ATP to 4'-phosphopantetheine, yielding dephospho-CoA (dPCoA) and pyrophosphate. The sequence is that of Phosphopantetheine adenylyltransferase from Vibrio atlanticus (strain LGP32) (Vibrio splendidus (strain Mel32)).